A 126-amino-acid chain; its full sequence is Follitropin subunit beta (126 aa).

An N-terminal signal peptide occupies residues 1–19 (MKLIQLCILFWCWRAICCQ). Intrachain disulfides connect Cys-21–Cys-69, Cys-35–Cys-84, Cys-38–Cys-122, Cys-46–Cys-100, Cys-50–Cys-102, and Cys-105–Cys-112. 2 N-linked (GlcNAc...) asparagine glycosylation sites follow: Asn-25 and Asn-42.

This sequence belongs to the glycoprotein hormones subunit beta family. As to quaternary structure, heterodimer. The active follitropin is a heterodimer composed of an alpha chain/CGA shared with other hormones and a unique beta chain/FSHB shown here.

Its subcellular location is the secreted. Functionally, together with the alpha chain CGA constitutes follitropin, the follicle-stimulating hormone, and provides its biological specificity to the hormone heterodimer. Binds FSHR, a G protein-coupled receptor, on target cells to activate downstream signaling pathways. Follitropin is involved in follicle development and spermatogenesis in reproductive organs. The sequence is that of Follitropin subunit beta (FSHB) from Phodopus sungorus (Striped hairy-footed hamster).